The sequence spans 373 residues: Lipoyl synthase (373 aa).

The tract at residues 12-36 is disordered; that stretch reads HVVSNDHPSSSPLQPGVKQSGEDKI. [4Fe-4S] cluster contacts are provided by cysteine 81, cysteine 86, cysteine 92, cysteine 107, cysteine 111, cysteine 114, and serine 323. One can recognise a Radical SAM core domain in the interval 93–312; it reads FSHGTATFMI…EEYGMALGFS (220 aa). The segment at 346–373 is disordered; it reads PAVSSTEHRERHTIASKSASKTESIPHR. The span at 360–373 shows a compositional bias: polar residues; sequence ASKSASKTESIPHR.

This sequence belongs to the radical SAM superfamily. Lipoyl synthase family. It depends on [4Fe-4S] cluster as a cofactor.

It is found in the cytoplasm. The catalysed reaction is [[Fe-S] cluster scaffold protein carrying a second [4Fe-4S](2+) cluster] + N(6)-octanoyl-L-lysyl-[protein] + 2 oxidized [2Fe-2S]-[ferredoxin] + 2 S-adenosyl-L-methionine + 4 H(+) = [[Fe-S] cluster scaffold protein] + N(6)-[(R)-dihydrolipoyl]-L-lysyl-[protein] + 4 Fe(3+) + 2 hydrogen sulfide + 2 5'-deoxyadenosine + 2 L-methionine + 2 reduced [2Fe-2S]-[ferredoxin]. It participates in protein modification; protein lipoylation via endogenous pathway; protein N(6)-(lipoyl)lysine from octanoyl-[acyl-carrier-protein]: step 2/2. Catalyzes the radical-mediated insertion of two sulfur atoms into the C-6 and C-8 positions of the octanoyl moiety bound to the lipoyl domains of lipoate-dependent enzymes, thereby converting the octanoylated domains into lipoylated derivatives. The polypeptide is Lipoyl synthase (Xylella fastidiosa (strain M12)).